Reading from the N-terminus, the 240-residue chain is Ribitol-5-phosphate cytidylyltransferase (240 aa).

CTP-binding positions include 8–11 (FAGG) and 81–87 (GETGQMS).

It belongs to the IspD/TarI cytidylyltransferase family. TarI subfamily.

It carries out the reaction D-ribitol 5-phosphate + CTP + H(+) = CDP-L-ribitol + diphosphate. The protein operates within cell wall biogenesis; poly(ribitol phosphate) teichoic acid biosynthesis. Its function is as follows. Catalyzes the transfer of the cytidylyl group of CTP to D-ribitol 5-phosphate. In Streptococcus agalactiae serotype V (strain ATCC BAA-611 / 2603 V/R), this protein is Ribitol-5-phosphate cytidylyltransferase.